Consider the following 281-residue polypeptide: Phosphate import ATP-binding protein PstB (281 aa).

One can recognise an ABC transporter domain in the interval 33–276; that stretch reads FKIENLSLWY…PQLKRTRDYI (244 aa). 67–74 provides a ligand contact to ATP; that stretch reads GPSGCGKS.

It belongs to the ABC transporter superfamily. Phosphate importer (TC 3.A.1.7) family. In terms of assembly, the complex is composed of two ATP-binding proteins (PstB), two transmembrane proteins (PstC and PstA) and a solute-binding protein (PstS).

It is found in the cell membrane. It carries out the reaction phosphate(out) + ATP + H2O = ADP + 2 phosphate(in) + H(+). Its function is as follows. Part of the ABC transporter complex PstSACB involved in phosphate import. Responsible for energy coupling to the transport system. This chain is Phosphate import ATP-binding protein PstB, found in Mycoplasma mobile (strain ATCC 43663 / 163K / NCTC 11711) (Mesomycoplasma mobile).